We begin with the raw amino-acid sequence, 405 residues long: Tryptophan synthase beta chain (405 aa).

N6-(pyridoxal phosphate)lysine is present on Lys96.

The protein belongs to the TrpB family. Tetramer of two alpha and two beta chains. Pyridoxal 5'-phosphate serves as cofactor.

The catalysed reaction is (1S,2R)-1-C-(indol-3-yl)glycerol 3-phosphate + L-serine = D-glyceraldehyde 3-phosphate + L-tryptophan + H2O. It participates in amino-acid biosynthesis; L-tryptophan biosynthesis; L-tryptophan from chorismate: step 5/5. Functionally, the beta subunit is responsible for the synthesis of L-tryptophan from indole and L-serine. The sequence is that of Tryptophan synthase beta chain from Clostridium botulinum (strain Eklund 17B / Type B).